An 83-amino-acid polypeptide reads, in one-letter code: Cytochrome b559 subunit alpha (83 aa).

A helical membrane pass occupies residues Val-21–Trp-35. His-23 provides a ligand contact to heme.

The protein belongs to the PsbE/PsbF family. Heterodimer of an alpha subunit and a beta subunit. PSII is composed of 1 copy each of membrane proteins PsbA, PsbB, PsbC, PsbD, PsbE, PsbF, PsbH, PsbI, PsbJ, PsbK, PsbL, PsbM, PsbT, PsbX, PsbY, PsbZ, Psb30/Ycf12, at least 3 peripheral proteins of the oxygen-evolving complex and a large number of cofactors. It forms dimeric complexes. Requires heme b as cofactor.

The protein localises to the plastid. It is found in the chloroplast thylakoid membrane. In terms of biological role, this b-type cytochrome is tightly associated with the reaction center of photosystem II (PSII). PSII is a light-driven water:plastoquinone oxidoreductase that uses light energy to abstract electrons from H(2)O, generating O(2) and a proton gradient subsequently used for ATP formation. It consists of a core antenna complex that captures photons, and an electron transfer chain that converts photonic excitation into a charge separation. This Marchantia polymorpha (Common liverwort) protein is Cytochrome b559 subunit alpha.